Reading from the N-terminus, the 98-residue chain is NADH-ubiquinone oxidoreductase chain 4L (98 aa).

The next 3 helical transmembrane spans lie at 1 to 21, 29 to 49, and 61 to 81; these read MSMV…GLLI, SLLC…VTIL, and IILL…LVMV.

Belongs to the complex I subunit 4L family. Core subunit of respiratory chain NADH dehydrogenase (Complex I) which is composed of 45 different subunits.

The protein localises to the mitochondrion inner membrane. The enzyme catalyses a ubiquinone + NADH + 5 H(+)(in) = a ubiquinol + NAD(+) + 4 H(+)(out). Its function is as follows. Core subunit of the mitochondrial membrane respiratory chain NADH dehydrogenase (Complex I) which catalyzes electron transfer from NADH through the respiratory chain, using ubiquinone as an electron acceptor. Part of the enzyme membrane arm which is embedded in the lipid bilayer and involved in proton translocation. The protein is NADH-ubiquinone oxidoreductase chain 4L (MT-ND4L) of Taxidea taxus (American badger).